The chain runs to 220 residues: Putative phosphatase YhcW (220 aa).

The Nucleophile role is filled by D8. A divalent metal cation-binding residues include D8, D10, and D166. The active-site Proton donor is D10.

The protein belongs to the HAD-like hydrolase superfamily. CbbY/CbbZ/Gph/YieH family. It depends on a divalent metal cation as a cofactor.

In Bacillus subtilis (strain 168), this protein is Putative phosphatase YhcW (yhcW).